We begin with the raw amino-acid sequence, 284 residues long: Proteasome subunit beta (284 aa).

Residues 1-56 (MSPMESSSTRFPGQALPAAYLTPGSSSFTDFLRVAAPELMPGSRPVPDGAVEAPHG) constitute a propeptide, removed in mature form; by autocatalysis. The active-site Nucleophile is the threonine 57.

The protein belongs to the peptidase T1B family. As to quaternary structure, the 20S proteasome core is composed of 14 alpha and 14 beta subunits that assemble into four stacked heptameric rings, resulting in a barrel-shaped structure. The two inner rings, each composed of seven catalytic beta subunits, are sandwiched by two outer rings, each composed of seven alpha subunits. The catalytic chamber with the active sites is on the inside of the barrel. Has a gated structure, the ends of the cylinder being occluded by the N-termini of the alpha-subunits. Is capped by the proteasome-associated ATPase, ARC.

The protein localises to the cytoplasm. It carries out the reaction Cleavage of peptide bonds with very broad specificity.. It participates in protein degradation; proteasomal Pup-dependent pathway. Its activity is regulated as follows. The formation of the proteasomal ATPase ARC-20S proteasome complex, likely via the docking of the C-termini of ARC into the intersubunit pockets in the alpha-rings, may trigger opening of the gate for substrate entry. Interconversion between the open-gate and close-gate conformations leads to a dynamic regulation of the 20S proteasome proteolysis activity. In terms of biological role, component of the proteasome core, a large protease complex with broad specificity involved in protein degradation. The protein is Proteasome subunit beta of Saccharopolyspora erythraea (strain ATCC 11635 / DSM 40517 / JCM 4748 / NBRC 13426 / NCIMB 8594 / NRRL 2338).